Consider the following 339-residue polypeptide: DNA repair protein RAD51 homolog 1 (339 aa).

Positions 1–23 are disordered; it reads MAMQVQFEASTDTSAEEESFGPE. In terms of domain architecture, HhH spans 48–77; that stretch reads TVESVAHAPKKELLNIKGISEAKADKILAE. Residue 127–134 coordinates ATP; sequence GEFRTGKT.

Belongs to the RecA family. RAD51 subfamily. In terms of assembly, forms linear homooligomers, giving rise to a RAD51 nucleoprotein filament, which is essential for strand-pairing reactions during DNA recombination. Expressed at high levels in lymphoid and reproductive organs.

Its subcellular location is the nucleus. The protein resides in the cytoplasm. The protein localises to the chromosome. In terms of biological role, plays an important role in homologous strand exchange, a key step in DNA repair through homologous recombination (HR). Binds to single-stranded DNA in an ATP-dependent manner to form nucleoprotein filaments which are essential for the homology search and strand exchange. Catalyzes the recognition of homology and strand exchange between homologous DNA partners to form a joint molecule between a processed DNA break and the repair template. Recruited to resolve stalled replication forks during replication stress. Also involved in interstrand cross-link repair. This is DNA repair protein RAD51 homolog 1 (RAD51A) from Gallus gallus (Chicken).